We begin with the raw amino-acid sequence, 299 residues long: Putative peptidyl-prolyl cis-trans isomerase jhp_0161 (299 aa).

The N-terminal stretch at 1 to 21 is a signal peptide; that stretch reads MKKNILNLALVGALSASFLMA. The PpiC domain maps to 154–253; it reads KQEAHARHIL…FGYHIIYLIS (100 aa).

The catalysed reaction is [protein]-peptidylproline (omega=180) = [protein]-peptidylproline (omega=0). The chain is Putative peptidyl-prolyl cis-trans isomerase jhp_0161 from Helicobacter pylori (strain J99 / ATCC 700824) (Campylobacter pylori J99).